A 156-amino-acid chain; its full sequence is Ribosomal RNA large subunit methyltransferase H (156 aa).

S-adenosyl-L-methionine-binding positions include L73, G104, and 123-128 (LSSLTL).

The protein belongs to the RNA methyltransferase RlmH family. Homodimer.

It localises to the cytoplasm. It catalyses the reaction pseudouridine(1915) in 23S rRNA + S-adenosyl-L-methionine = N(3)-methylpseudouridine(1915) in 23S rRNA + S-adenosyl-L-homocysteine + H(+). Functionally, specifically methylates the pseudouridine at position 1915 (m3Psi1915) in 23S rRNA. The chain is Ribosomal RNA large subunit methyltransferase H from Neisseria meningitidis serogroup C (strain 053442).